The primary structure comprises 277 residues: NH(3)-dependent NAD(+) synthetase (277 aa).

36–43 (GLSGGIDS) serves as a coordination point for ATP. Residue aspartate 42 coordinates Mg(2+). Arginine 118 provides a ligand contact to deamido-NAD(+). Threonine 138 contributes to the ATP binding site. Residue glutamate 143 coordinates Mg(2+). Positions 167 and 189 each coordinate ATP.

This sequence belongs to the NAD synthetase family. In terms of assembly, homodimer.

It carries out the reaction deamido-NAD(+) + NH4(+) + ATP = AMP + diphosphate + NAD(+) + H(+). Its pathway is cofactor biosynthesis; NAD(+) biosynthesis; NAD(+) from deamido-NAD(+) (ammonia route): step 1/1. Catalyzes the ATP-dependent amidation of deamido-NAD to form NAD. Uses ammonia as a nitrogen source. The protein is NH(3)-dependent NAD(+) synthetase of Chlorobium phaeobacteroides (strain BS1).